A 136-amino-acid chain; its full sequence is Large ribosomal subunit protein uL16 (136 aa).

The protein belongs to the universal ribosomal protein uL16 family. As to quaternary structure, part of the 50S ribosomal subunit.

Functionally, binds 23S rRNA and is also seen to make contacts with the A and possibly P site tRNAs. The protein is Large ribosomal subunit protein uL16 of Rickettsia rickettsii (strain Iowa).